The sequence spans 392 residues: Extracellular metalloproteinase 4 (392 aa).

The propeptide occupies 1 to 9; it reads VHSVVDYVS. N-linked (GlcNAc...) asparagine glycans are attached at residues Asn-27 and Asn-176. His-193 provides a ligand contact to Zn(2+). Glu-194 is an active-site residue. Residue His-197 participates in Zn(2+) binding. N-linked (GlcNAc...) asparagine glycans are attached at residues Asn-359 and Asn-385.

It belongs to the peptidase M36 family. Requires Zn(2+) as cofactor.

It localises to the secreted. Functionally, secreted metalloproteinase probably acting as a virulence factor. The chain is Extracellular metalloproteinase 4 (MEP4) from Trichophyton violaceum.